We begin with the raw amino-acid sequence, 396 residues long: L-aspartate--glyoxylate aminotransferase (396 aa).

Lys-196 is subject to N6-(pyridoxal phosphate)lysine.

The protein belongs to the class-V pyridoxal-phosphate-dependent aminotransferase family. The cofactor is pyridoxal 5'-phosphate.

It catalyses the reaction oxaloacetate + glycine = glyoxylate + L-aspartate. In terms of biological role, catalyzes the transamination of glyoxylate into glycine using L-aspartate as the preferred amino group donor. Is essential for the growth of P.denitrificans in the presence of glycolate and glyoxylate since it functions in glyoxylate assimilation via the beta-hydroxyaspartate cycle (BHAC). Can catalyze the reverse reaction in vitro, and also use L-serine and L-glutamate as amino group donor, but with much less efficiency than L-aspartate. The chain is L-aspartate--glyoxylate aminotransferase from Paracoccus denitrificans (strain Pd 1222).